The primary structure comprises 530 residues: Light-independent protochlorophyllide reductase subunit B (530 aa).

Position 36 (aspartate 36) interacts with [4Fe-4S] cluster. Aspartate 287 acts as the Proton donor in catalysis. 422–423 lines the substrate pocket; it reads GL. Residues 453–472 form a disordered region; sequence PAVQTASSEPQPSAIETPSA. Over residues 454 to 463 the composition is skewed to polar residues; sequence AVQTASSEPQ.

The protein belongs to the ChlB/BchB/BchZ family. As to quaternary structure, protochlorophyllide reductase is composed of three subunits; BchL, BchN and BchB. Forms a heterotetramer of two BchB and two BchN subunits. [4Fe-4S] cluster serves as cofactor.

The enzyme catalyses chlorophyllide a + oxidized 2[4Fe-4S]-[ferredoxin] + 2 ADP + 2 phosphate = protochlorophyllide a + reduced 2[4Fe-4S]-[ferredoxin] + 2 ATP + 2 H2O. Its pathway is porphyrin-containing compound metabolism; bacteriochlorophyll biosynthesis (light-independent). Functionally, component of the dark-operative protochlorophyllide reductase (DPOR) that uses Mg-ATP and reduced ferredoxin to reduce ring D of protochlorophyllide (Pchlide) to form chlorophyllide a (Chlide). This reaction is light-independent. The NB-protein (BchN-BchB) is the catalytic component of the complex. In Rhodopseudomonas palustris (strain BisB18), this protein is Light-independent protochlorophyllide reductase subunit B.